The primary structure comprises 123 residues: UPF0738 protein Bcer98_0913 (123 aa).

The protein belongs to the UPF0738 family.

The sequence is that of UPF0738 protein Bcer98_0913 from Bacillus cytotoxicus (strain DSM 22905 / CIP 110041 / 391-98 / NVH 391-98).